The chain runs to 443 residues: Trigger factor (443 aa).

The PPIase FKBP-type domain occupies 169–254 (GDIAFLDFSG…LNSIKEVQLP (86 aa)).

It belongs to the FKBP-type PPIase family. Tig subfamily.

The protein localises to the cytoplasm. The catalysed reaction is [protein]-peptidylproline (omega=180) = [protein]-peptidylproline (omega=0). Functionally, involved in protein export. Acts as a chaperone by maintaining the newly synthesized protein in an open conformation. Functions as a peptidyl-prolyl cis-trans isomerase. The protein is Trigger factor of Mycoplasmoides gallisepticum (strain R(low / passage 15 / clone 2)) (Mycoplasma gallisepticum).